Here is a 433-residue protein sequence, read N- to C-terminus: MSTAKTLTLEMHLGDLMIGELSFDATADTFAVHYTKDWQQSGFPLSPTIPLDGTGTSNQISMFLVNLLPENKGLDYLIESLGVSKGNTFALIRAIGLDTAGAIAFVPKGALLPETQLRPIKAEEVIQRIEDPTMWPMEIWDGKPRLSVAGVQPKLNLFYNGKEFAFAEGTLSSTHIVKFEKYHHLVINEFITMRLAKVLGMNVANVDIVHFGRYKALCVERFDRRNIPGEQRVLRRHIVDSCQALGFSVSKKYERNFGTGRDVKDIREGVSFNRLFSLAAKCRNPVAAKQDMLQWALFNLLTGNADAHGKNYSFFMTPSGMEPTPWYDLVSVDMYEDFEQQLAMAIDDEFDPNSIYAYQLAAFMDGLGLPRNLLISNLTRIARRIPQAIAEVILMLPPLDEDEASFVAHYKTQLLARCERYLGFVDEVRDVEV.

S147 carries the post-translational modification Phosphoserine; by autocatalysis. Residues 151 to 154, K178, and 220 to 222 each bind ATP; these read VQPK and ERF. D306 serves as the catalytic Proton acceptor. ATP contacts are provided by residues 308–311 and 327–328; these read HGKN and YD. 2 consecutive DNA-binding regions follow at residues 380–384 and R429; that span reads RIARR.

The protein belongs to the HipA Ser/Thr kinase family. Monomer. Forms a HipA(2)HipB(2)-DNA complex with cognate antitoxin HipB; has higher affinity for the latter when HipB is prebound to DNA and HipA is phosphorylated. Binds DNA in the ternary complex.

The enzyme catalyses L-seryl-[protein] + ATP = O-phospho-L-seryl-[protein] + ADP + H(+). It carries out the reaction L-threonyl-[protein] + ATP = O-phospho-L-threonyl-[protein] + ADP + H(+). Its function is as follows. Toxic component of a type II toxin-antitoxin (TA) system; overexpression in wild-type temporarily inhibits cell growth, overexpression in a hipAB deletion leads to acute growth inhibition. The toxic effect of HipA is neutralized by its cognate antitoxin HipB. In the ternary phosphoserine-HipA-HipB-DNA complex the DNA is bent about 125 degrees; all HipA in the crystallized ternary complex is phosphorylated. In E.coli phosphorylation of HipA is thought to release HipB from the HipA-HipB-DNA complex, suggesting the complex functions differently in the 2 bacteria. Phosphorylates Glu-tRNA-ligase (GltX, on 'Ser-239') in vivo, with HipB probably acts as a corepressor for transcription of the hipBA promoter. The protein is Serine/threonine-protein kinase toxin HipA of Shewanella oneidensis (strain ATCC 700550 / JCM 31522 / CIP 106686 / LMG 19005 / NCIMB 14063 / MR-1).